Here is a 329-residue protein sequence, read N- to C-terminus: Biotin synthase (329 aa).

Positions 38-262 constitute a Radical SAM core domain; sequence NTIQVSTLLS…IMPYSYIRLS (225 aa). Residues Cys53, Cys57, and Cys60 each contribute to the [4Fe-4S] cluster site. 4 residues coordinate [2Fe-2S] cluster: Cys97, Cys128, Cys188, and Arg260.

Belongs to the radical SAM superfamily. Biotin synthase family. Homodimer. Requires [4Fe-4S] cluster as cofactor. [2Fe-2S] cluster serves as cofactor.

The catalysed reaction is (4R,5S)-dethiobiotin + (sulfur carrier)-SH + 2 reduced [2Fe-2S]-[ferredoxin] + 2 S-adenosyl-L-methionine = (sulfur carrier)-H + biotin + 2 5'-deoxyadenosine + 2 L-methionine + 2 oxidized [2Fe-2S]-[ferredoxin]. The protein operates within cofactor biosynthesis; biotin biosynthesis; biotin from 7,8-diaminononanoate: step 2/2. Its function is as follows. Catalyzes the conversion of dethiobiotin (DTB) to biotin by the insertion of a sulfur atom into dethiobiotin via a radical-based mechanism. This is Biotin synthase from Acinetobacter baylyi (strain ATCC 33305 / BD413 / ADP1).